Reading from the N-terminus, the 477-residue chain is Aspartyl/glutamyl-tRNA(Asn/Gln) amidotransferase subunit B (477 aa).

Belongs to the GatB/GatE family. GatB subfamily. As to quaternary structure, heterotrimer of A, B and C subunits.

It carries out the reaction L-glutamyl-tRNA(Gln) + L-glutamine + ATP + H2O = L-glutaminyl-tRNA(Gln) + L-glutamate + ADP + phosphate + H(+). It catalyses the reaction L-aspartyl-tRNA(Asn) + L-glutamine + ATP + H2O = L-asparaginyl-tRNA(Asn) + L-glutamate + ADP + phosphate + 2 H(+). In terms of biological role, allows the formation of correctly charged Asn-tRNA(Asn) or Gln-tRNA(Gln) through the transamidation of misacylated Asp-tRNA(Asn) or Glu-tRNA(Gln) in organisms which lack either or both of asparaginyl-tRNA or glutaminyl-tRNA synthetases. The reaction takes place in the presence of glutamine and ATP through an activated phospho-Asp-tRNA(Asn) or phospho-Glu-tRNA(Gln). This Clostridium tetani (strain Massachusetts / E88) protein is Aspartyl/glutamyl-tRNA(Asn/Gln) amidotransferase subunit B.